The sequence spans 737 residues: Aryl hydrocarbon receptor nuclear translocator 2 (737 aa).

A disordered region spans residues methionine 1–glycine 73. Positions serine 64–glycine 73 are enriched in basic and acidic residues. The bHLH domain occupies tyrosine 78–methionine 131. PAS domains follow at residues threonine 149–methionine 221 and serine 340–lysine 406. Residues serine 413 to leucine 456 enclose the PAC domain. Disordered stretches follow at residues methionine 525–serine 556 and glutamine 588–tyrosine 721. Polar residues-rich tracts occupy residues proline 528–proline 543 and glutamine 588–aspartate 626. Over residues proline 627–serine 642 the composition is skewed to low complexity. A compositionally biased stretch (polar residues) spans glycine 643–phenylalanine 656. Over residues serine 659–glutamine 688 the composition is skewed to low complexity.

In terms of assembly, efficient DNA binding requires dimerization with another bHLH protein. Heterodimer with the aryl hydrocarbon receptor (AHR), SIM1 or HIF2A/EPAS-1. In terms of tissue distribution, isoform 1 and isoform 2 are most highly expressed in the brain, eye and skeletal muscle and to a lower degree in liver, heart, kidney and swim bladder. Isoform 3 is most highly expressed in the eye, forebrain, midbrain, hindbrain, skeletal muscle, gills and brain but is barely detectable in liver, heart, kidney and swim bladder. Before the pharyngula period isoform 3 is expressed throughout the entire embryo and during this period extensively in the brain and eye.

It is found in the nucleus. Transcription factor that plays a role in the development of the hypothalamo-pituitary axis. Specifically recognizes the xenobiotic response element (XRE). Isoform 1 acts as a transcriptional activator. Isoform 3 acts as a transcriptional repressor. This Danio rerio (Zebrafish) protein is Aryl hydrocarbon receptor nuclear translocator 2.